Consider the following 145-residue polypeptide: Secreted RxLR effector protein 43 (145 aa).

A signal peptide spans 1–20 (MKVTMALAALCVALQAPCIG). The RxLR motif lies at 31-34 (RHLR).

The protein belongs to the RxLR effector family.

The protein resides in the secreted. It localises to the host nucleus. Its subcellular location is the host cytoplasm. Its function is as follows. Secreted effector that completely suppresses the host cell death induced by cell death-inducing proteins. This Plasmopara viticola (Downy mildew of grapevine) protein is Secreted RxLR effector protein 43.